The chain runs to 419 residues: Gamma-glutamyl phosphate reductase (419 aa).

This sequence belongs to the gamma-glutamyl phosphate reductase family.

Its subcellular location is the cytoplasm. The enzyme catalyses L-glutamate 5-semialdehyde + phosphate + NADP(+) = L-glutamyl 5-phosphate + NADPH + H(+). It participates in amino-acid biosynthesis; L-proline biosynthesis; L-glutamate 5-semialdehyde from L-glutamate: step 2/2. Functionally, catalyzes the NADPH-dependent reduction of L-glutamate 5-phosphate into L-glutamate 5-semialdehyde and phosphate. The product spontaneously undergoes cyclization to form 1-pyrroline-5-carboxylate. This Bordetella bronchiseptica (strain ATCC BAA-588 / NCTC 13252 / RB50) (Alcaligenes bronchisepticus) protein is Gamma-glutamyl phosphate reductase.